Consider the following 873-residue polypeptide: Aminopeptidase M1-D (873 aa).

Residues 96-203 (LGEGVLAMRF…MSTYLVAIVV (108 aa)) are required for membrane association. Residues E136 and 269-273 (GAMEN) each bind substrate. H305 provides a ligand contact to Zn(2+). Residue E306 is the Proton acceptor of the active site. 2 residues coordinate Zn(2+): H309 and E328. Residues 721–722 (LL) carry the Dileucine internalization motif motif.

The protein belongs to the peptidase M1 family. Homodimer. It depends on Zn(2+) as a cofactor.

Its subcellular location is the membrane. The protein resides in the microsome membrane. It is found in the cytoplasm. It carries out the reaction Release of an N-terminal amino acid, Xaa-|-Yaa- from a peptide, amide or arylamide. Xaa is preferably Ala, but may be most amino acids including Pro (slow action). When a terminal hydrophobic residue is followed by a prolyl residue, the two may be released as an intact Xaa-Pro dipeptide.. In Oryza sativa subsp. japonica (Rice), this protein is Aminopeptidase M1-D.